A 453-amino-acid chain; its full sequence is Chromosomal replication initiator protein DnaA (453 aa).

Residues 1–71 are domain I, interacts with DnaA modulators; the sequence is MSEKEIWEKV…QAILFDVVGY (71 aa). The tract at residues 71–114 is domain II; it reads YEVKPHFITTEELANYSNNETATPKETTKPSTETTEDNHVLGRE. Residues 115-331 form a domain III, AAA+ region region; it reads QFNAHNTFDT…GALTRLLAYS (217 aa). ATP is bound by residues Gly159, Gly161, Lys162, and Thr163. Residues 332–453 are domain IV, binds dsDNA; that stretch reads QLLGKPITTE…ENLEKEIRNV (122 aa).

It belongs to the DnaA family. In terms of assembly, oligomerizes as a right-handed, spiral filament on DNA at oriC.

Its subcellular location is the cytoplasm. Plays an essential role in the initiation and regulation of chromosomal replication. ATP-DnaA binds to the origin of replication (oriC) to initiate formation of the DNA replication initiation complex once per cell cycle. Binds the DnaA box (a 9 base pair repeat at the origin) and separates the double-stranded (ds)DNA. Forms a right-handed helical filament on oriC DNA; dsDNA binds to the exterior of the filament while single-stranded (ss)DNA is stabiized in the filament's interior. The ATP-DnaA-oriC complex binds and stabilizes one strand of the AT-rich DNA unwinding element (DUE), permitting loading of DNA polymerase. After initiation quickly degrades to an ADP-DnaA complex that is not apt for DNA replication. Binds acidic phospholipids. This chain is Chromosomal replication initiator protein DnaA, found in Staphylococcus aureus (strain bovine RF122 / ET3-1).